The sequence spans 131 residues: Profilin-1 (131 aa).

It belongs to the profilin family. As to quaternary structure, occurs in many kinds of cells as a complex with monomeric actin in a 1:1 ratio.

The protein resides in the cytoplasm. The protein localises to the cytoskeleton. In terms of biological role, binds to actin and affects the structure of the cytoskeleton. At high concentrations, profilin prevents the polymerization of actin, whereas it enhances it at low concentrations. By binding to PIP2, it inhibits the formation of IP3 and DG. This chain is Profilin-1, found in Hevea brasiliensis (Para rubber tree).